A 512-amino-acid chain; its full sequence is Histidine ammonia-lyase (512 aa).

The segment at residues Ala-144 to Gly-146 is a cross-link (5-imidazolinone (Ala-Gly)). A 2,3-didehydroalanine (Ser) modification is found at Ser-145.

Belongs to the PAL/histidase family. Post-translationally, contains an active site 4-methylidene-imidazol-5-one (MIO), which is formed autocatalytically by cyclization and dehydration of residues Ala-Ser-Gly.

It is found in the cytoplasm. The enzyme catalyses L-histidine = trans-urocanate + NH4(+). The protein operates within amino-acid degradation; L-histidine degradation into L-glutamate; N-formimidoyl-L-glutamate from L-histidine: step 1/3. The protein is Histidine ammonia-lyase of Desulfotalea psychrophila (strain LSv54 / DSM 12343).